Here is a 552-residue protein sequence, read N- to C-terminus: Phosphoglucomutase (552 aa).

S143 serves as the catalytic Phosphoserine intermediate. 4 residues coordinate Mg(2+): S143, D295, D297, and D299.

Belongs to the phosphohexose mutase family. The cofactor is Mg(2+).

It catalyses the reaction alpha-D-glucose 1-phosphate = alpha-D-glucose 6-phosphate. The protein operates within glycolipid metabolism; diglucosyl-diacylglycerol biosynthesis. Its function is as follows. Catalyzes the interconversion between glucose-6-phosphate and alpha-glucose-1-phosphate. This is the first step in the biosynthesis of diglucosyl-diacylglycerol (Glc2-DAG), i.e. the predominant glycolipid found in the S.aureus membrane, which is also used as a membrane anchor for lipoteichoic acid (LTA). In Staphylococcus aureus (strain MRSA252), this protein is Phosphoglucomutase (pgcA).